The primary structure comprises 292 residues: PLRDTHPHLTMKNQTFHLQGFVDGLRDLTTTERHHNAYGDPFTTLSPVVPTVSTTLSPPSTTGDPALSPEMSPSSLLGLLAGLQVVYFLWTKIPTIAQNLDWWWTSLSFPGGIPECTGQNSQFQTCKHLPTSCPPTCNGFRWMYLRRFIIYLLVLLLCLIFLLVLLDWKGLLPVCPLQPTTETTVNCRQCTLSVQDTYTPPYCCCLKPTAGNCTCWPIPSSWALGNYLWEWALARFSWLNLLVPLLQWLGGISLIAWFLLIWMIWFWGPALLSILPPFIPIFVLFFLIWVYI.

A pre-S1 region spans residues 1–10 (PLRDTHPHLT). A pre-S region spans residues 1 to 70 (PLRDTHPHLT…TTGDPALSPE (70 aa)). Residues 1 to 75 (PLRDTHPHLT…ALSPEMSPSS (75 aa)) are Virion surface; in external conformation-facing. Topologically, residues 1 to 147 (PLRDTHPHLT…NGFRWMYLRR (147 aa)) are intravirion; in internal conformation. N-linked (GlcNAc...) asparagine glycosylation occurs at R3. The pre-S2 stretch occupies residues 11–70 (MKNQTFHLQGFVDGLRDLTTTERHHNAYGDPFTTLSPVVPTVSTTLSPPSTTGDPALSPE). Residues 76–96 (LLGLLAGLQVVYFLWTKIPTI) traverse the membrane as a helical segment. The Intravirion; in external conformation portion of the chain corresponds to 97 to 147 (AQNLDWWWTSLSFPGGIPECTGQNSQFQTCKHLPTSCPPTCNGFRWMYLRR). Residues 148–168 (FIIYLLVLLLCLIFLLVLLDW) traverse the membrane as a helical segment. Residues 169 to 240 (KGLLPVCPLQ…WALARFSWLN (72 aa)) are Virion surface-facing. N212 is a glycosylation site (N-linked (GlcNAc...) asparagine; by host). Residues 241-261 (LLVPLLQWLGGISLIAWFLLI) form a helical membrane-spanning segment. At 262–267 (WMIWFW) the chain is on the intravirion side. The helical transmembrane segment at 268-290 (GPALLSILPPFIPIFVLFFLIWV) threads the bilayer. Topologically, residues 291 to 292 (YI) are virion surface.

This sequence belongs to the orthohepadnavirus major surface antigen family. As to quaternary structure, in its internal form (Li-HBsAg), interacts with the capsid protein and with the isoform S. Interacts with host chaperone CANX. In terms of assembly, associates with host chaperone CANX through its pre-S2 N glycan; this association may be essential for isoform M proper secretion. Interacts with isoform L. Interacts with the antigens of satellite virus HDV (HDVAgs); this interaction is required for encapsidation of HDV genomic RNA. Isoform M is N-glycosylated by host at the pre-S2 region. In terms of processing, myristoylated.

The protein localises to the virion membrane. Its function is as follows. The large envelope protein exists in two topological conformations, one which is termed 'external' or Le-HBsAg and the other 'internal' or Li-HBsAg. In its external conformation the protein attaches the virus to cell receptors and thereby initiating infection. This interaction determines the species specificity and liver tropism. The large envelope protein probably also assumes fusion between virion and host membranes. In its internal conformation the protein plays a role in virion morphogenesis and mediates the contact with the nucleocapsid like a matrix protein. In terms of biological role, the middle envelope protein plays an important role in the budding of the virion. It is involved in the induction of budding in a nucleocapsid independent way. In this process the majority of envelope proteins bud to form subviral lipoprotein particles of 22 nm of diameter that do not contain a nucleocapsid. The polypeptide is Large envelope protein (S) (Marmota monax (Woodchuck)).